The chain runs to 391 residues: 8-amino-7-oxononanoate synthase (391 aa).

Arginine 19 is a substrate binding site. 106–107 (GY) contacts pyridoxal 5'-phosphate. Histidine 131 contacts substrate. Residues serine 178, histidine 206, and threonine 234 each coordinate pyridoxal 5'-phosphate. Lysine 237 carries the post-translational modification N6-(pyridoxal phosphate)lysine. Threonine 353 is a binding site for substrate.

This sequence belongs to the class-II pyridoxal-phosphate-dependent aminotransferase family. BioF subfamily. In terms of assembly, homodimer. Pyridoxal 5'-phosphate serves as cofactor.

The enzyme catalyses 6-carboxyhexanoyl-[ACP] + L-alanine + H(+) = (8S)-8-amino-7-oxononanoate + holo-[ACP] + CO2. It functions in the pathway cofactor biosynthesis; biotin biosynthesis. Catalyzes the decarboxylative condensation of pimeloyl-[acyl-carrier protein] and L-alanine to produce 8-amino-7-oxononanoate (AON), [acyl-carrier protein], and carbon dioxide. The polypeptide is 8-amino-7-oxononanoate synthase (Pelobacter propionicus (strain DSM 2379 / NBRC 103807 / OttBd1)).